A 121-amino-acid polypeptide reads, in one-letter code: Small ribosomal subunit protein uS13 (121 aa).

A disordered region spans residues 92 to 121 (RKGLPVRGQSSKTNARTVKGPRKTVANKKK). Over residues 110 to 121 (KGPRKTVANKKK) the composition is skewed to basic residues.

It belongs to the universal ribosomal protein uS13 family. Part of the 30S ribosomal subunit. Forms a loose heterodimer with protein S19. Forms two bridges to the 50S subunit in the 70S ribosome.

Functionally, located at the top of the head of the 30S subunit, it contacts several helices of the 16S rRNA. In the 70S ribosome it contacts the 23S rRNA (bridge B1a) and protein L5 of the 50S subunit (bridge B1b), connecting the 2 subunits; these bridges are implicated in subunit movement. Contacts the tRNAs in the A and P-sites. This is Small ribosomal subunit protein uS13 from Mycoplasma mycoides subsp. mycoides SC (strain CCUG 32753 / NCTC 10114 / PG1).